Here is a 200-residue protein sequence, read N- to C-terminus: Endoribonuclease YbeY (200 aa).

3 residues coordinate Zn(2+): His-120, His-124, and His-130.

Belongs to the endoribonuclease YbeY family. Zn(2+) serves as cofactor.

It is found in the cytoplasm. Single strand-specific metallo-endoribonuclease involved in late-stage 70S ribosome quality control and in maturation of the 3' terminus of the 16S rRNA. The protein is Endoribonuclease YbeY of Corynebacterium efficiens (strain DSM 44549 / YS-314 / AJ 12310 / JCM 11189 / NBRC 100395).